A 508-amino-acid chain; its full sequence is Photosystem II CP47 reaction center protein (508 aa).

The next 6 membrane-spanning stretches (helical) occupy residues A21–S36, I101–W115, G140–F156, I203–S218, V237–V252, and S457–R472.

It belongs to the PsbB/PsbC family. PsbB subfamily. As to quaternary structure, PSII is composed of 1 copy each of membrane proteins PsbA, PsbB, PsbC, PsbD, PsbE, PsbF, PsbH, PsbI, PsbJ, PsbK, PsbL, PsbM, PsbT, PsbX, PsbY, PsbZ, Psb30/Ycf12, at least 3 peripheral proteins of the oxygen-evolving complex and a large number of cofactors. It forms dimeric complexes. Interacts with PAM68. Interacts with HHL1. It depends on Binds multiple chlorophylls. PSII binds additional chlorophylls, carotenoids and specific lipids. as a cofactor.

It is found in the plastid. Its subcellular location is the chloroplast thylakoid membrane. In terms of biological role, one of the components of the core complex of photosystem II (PSII). It binds chlorophyll and helps catalyze the primary light-induced photochemical processes of PSII. PSII is a light-driven water:plastoquinone oxidoreductase, using light energy to abstract electrons from H(2)O, generating O(2) and a proton gradient subsequently used for ATP formation. In Arabidopsis thaliana (Mouse-ear cress), this protein is Photosystem II CP47 reaction center protein.